A 373-amino-acid chain; its full sequence is GTP cyclohydrolase 1 type 2 homolog (373 aa).

A divalent metal cation is bound by residues His-67, His-68, Asp-106, His-333, and Glu-336.

It belongs to the GTP cyclohydrolase I type 2/NIF3 family. In terms of assembly, homohexamer.

This is GTP cyclohydrolase 1 type 2 homolog from Listeria monocytogenes serovar 1/2a (strain ATCC BAA-679 / EGD-e).